Consider the following 101-residue polypeptide: Small ribosomal subunit protein uS14 (101 aa).

It belongs to the universal ribosomal protein uS14 family. Part of the 30S ribosomal subunit. Contacts proteins S3 and S10.

Its function is as follows. Binds 16S rRNA, required for the assembly of 30S particles and may also be responsible for determining the conformation of the 16S rRNA at the A site. This Orientia tsutsugamushi (strain Ikeda) (Rickettsia tsutsugamushi) protein is Small ribosomal subunit protein uS14.